A 350-amino-acid polypeptide reads, in one-letter code: Protein-glutamate methylesterase/protein-glutamine glutaminase 2 (350 aa).

The region spanning 3–121 is the Response regulatory domain; sequence RVLLVDDSPV…DPDYEEAVSE (119 aa). A 4-aspartylphosphate modification is found at D54. One can recognise a CheB-type methylesterase domain in the interval 158 to 322; that stretch reads IHQDIRVIVI…SFVYGMPGAA (165 aa). Residues S170, H197, and D290 contribute to the active site.

The protein belongs to the CheB family. In terms of processing, phosphorylated by CheA. Phosphorylation of the N-terminal regulatory domain activates the methylesterase activity.

Its subcellular location is the cytoplasm. The enzyme catalyses [protein]-L-glutamate 5-O-methyl ester + H2O = L-glutamyl-[protein] + methanol + H(+). It carries out the reaction L-glutaminyl-[protein] + H2O = L-glutamyl-[protein] + NH4(+). Involved in chemotaxis. Part of a chemotaxis signal transduction system that modulates chemotaxis in response to various stimuli. Catalyzes the demethylation of specific methylglutamate residues introduced into the chemoreceptors (methyl-accepting chemotaxis proteins or MCP) by CheR. Also mediates the irreversible deamidation of specific glutamine residues to glutamic acid. The protein is Protein-glutamate methylesterase/protein-glutamine glutaminase 2 of Methanospirillum hungatei JF-1 (strain ATCC 27890 / DSM 864 / NBRC 100397 / JF-1).